We begin with the raw amino-acid sequence, 340 residues long: tRNA N6-adenosine threonylcarbamoyltransferase (340 aa).

2 residues coordinate Fe cation: histidine 111 and histidine 115. Substrate-binding positions include 134–138, aspartate 167, glycine 180, and asparagine 276; that span reads LVSGG. A Fe cation-binding site is contributed by aspartate 304.

It belongs to the KAE1 / TsaD family. Fe(2+) serves as cofactor.

It is found in the cytoplasm. It catalyses the reaction L-threonylcarbamoyladenylate + adenosine(37) in tRNA = N(6)-L-threonylcarbamoyladenosine(37) in tRNA + AMP + H(+). Its function is as follows. Required for the formation of a threonylcarbamoyl group on adenosine at position 37 (t(6)A37) in tRNAs that read codons beginning with adenine. Is involved in the transfer of the threonylcarbamoyl moiety of threonylcarbamoyl-AMP (TC-AMP) to the N6 group of A37, together with TsaE and TsaB. TsaD likely plays a direct catalytic role in this reaction. In Helicobacter pylori (strain J99 / ATCC 700824) (Campylobacter pylori J99), this protein is tRNA N6-adenosine threonylcarbamoyltransferase.